A 161-amino-acid chain; its full sequence is ATP synthase subunit b 1 (161 aa).

Residues 5-25 form a helical membrane-spanning segment; the sequence is PETWVAIAFLLLMGVFAYVGV.

The protein belongs to the ATPase B chain family. In terms of assembly, F-type ATPases have 2 components, F(1) - the catalytic core - and F(0) - the membrane proton channel. F(1) has five subunits: alpha(3), beta(3), gamma(1), delta(1), epsilon(1). F(0) has three main subunits: a(1), b(2) and c(10-14). The alpha and beta chains form an alternating ring which encloses part of the gamma chain. F(1) is attached to F(0) by a central stalk formed by the gamma and epsilon chains, while a peripheral stalk is formed by the delta and b chains.

It is found in the cell inner membrane. Functionally, f(1)F(0) ATP synthase produces ATP from ADP in the presence of a proton or sodium gradient. F-type ATPases consist of two structural domains, F(1) containing the extramembraneous catalytic core and F(0) containing the membrane proton channel, linked together by a central stalk and a peripheral stalk. During catalysis, ATP synthesis in the catalytic domain of F(1) is coupled via a rotary mechanism of the central stalk subunits to proton translocation. Its function is as follows. Component of the F(0) channel, it forms part of the peripheral stalk, linking F(1) to F(0). The chain is ATP synthase subunit b 1 from Nitrobacter winogradskyi (strain ATCC 25391 / DSM 10237 / CIP 104748 / NCIMB 11846 / Nb-255).